A 497-amino-acid polypeptide reads, in one-letter code: 4,4'-diaponeurosporene oxygenase (497 aa).

7–19 (VIGGGLGGISAAI) contacts FAD.

It belongs to the carotenoid/retinoid oxidoreductase family. CrtP subfamily. FAD is required as a cofactor.

The catalysed reaction is all-trans-4,4'-diaponeurosporene + 2 AH2 + 2 O2 = 4,4'-diaponeurosporenal + 2 A + 3 H2O. Its pathway is carotenoid biosynthesis; staphyloxanthin biosynthesis; staphyloxanthin from farnesyl diphosphate: step 3/5. Functionally, involved in the biosynthesis of the yellow-orange carotenoid staphyloxanthin, which plays a role in the virulence via its protective function against oxidative stress. Catalyzes the oxidation of the terminal methyl side group of 4,4'-diaponeurosporene to form 4,4'-diaponeurosporen-4-al. The sequence is that of 4,4'-diaponeurosporene oxygenase from Staphylococcus aureus (strain USA300).